The chain runs to 177 residues: NEDD8-conjugating enzyme ubc12 (177 aa).

The UBC core domain occupies 23–167 (PAQIRIQKDV…VRTAMKGGLV (145 aa)). Cys105 serves as the catalytic Glycyl thioester intermediate.

Belongs to the ubiquitin-conjugating enzyme family. UBC12 subfamily.

It catalyses the reaction [E1 NEDD8-activating enzyme]-S-[NEDD8 protein]-yl-L-cysteine + [E2 NEDD8-conjugating enzyme]-L-cysteine = [E1 NEDD8-activating enzyme]-L-cysteine + [E2 NEDD8-conjugating enzyme]-S-[NEDD8-protein]-yl-L-cysteine.. It participates in protein modification; protein neddylation. Accepts the ubiquitin-like protein NEDD8/RUB1 from the UBA3-ULA1 E1 complex and catalyzes its covalent attachment to other proteins. This Schizosaccharomyces pombe (strain 972 / ATCC 24843) (Fission yeast) protein is NEDD8-conjugating enzyme ubc12 (ubc12).